The chain runs to 304 residues: Nucleotide-binding protein KRH_12070 (304 aa).

27 to 34 (GMSGAGRS) is a binding site for ATP. 78 to 81 (DVRG) contacts GTP.

This sequence belongs to the RapZ-like family.

Displays ATPase and GTPase activities. In Kocuria rhizophila (strain ATCC 9341 / DSM 348 / NBRC 103217 / DC2201), this protein is Nucleotide-binding protein KRH_12070.